Reading from the N-terminus, the 950-residue chain is UPF0182 protein P9303_14611 (950 aa).

9 helical membrane-spanning segments follow: residues 20–40 (LLLS…WLWF), 53–73 (WLWQ…CQLW), 102–122 (LLGC…LAWL), 141–161 (IWAL…MLGN), 173–193 (CFCF…ALAI), 209–229 (FGLG…AQLV), 259–279 (CDVM…LLWL), 308–328 (SLAS…PWIQ), and 335–355 (LIAS…APFV).

Belongs to the UPF0182 family.

It localises to the cell membrane. The polypeptide is UPF0182 protein P9303_14611 (Prochlorococcus marinus (strain MIT 9303)).